The chain runs to 160 residues: S-ribosylhomocysteine lyase (160 aa).

3 residues coordinate Fe cation: His-57, His-61, and Cys-127.

The protein belongs to the LuxS family. Homodimer. Fe cation serves as cofactor.

The enzyme catalyses S-(5-deoxy-D-ribos-5-yl)-L-homocysteine = (S)-4,5-dihydroxypentane-2,3-dione + L-homocysteine. Involved in the synthesis of autoinducer 2 (AI-2) which is secreted by bacteria and is used to communicate both the cell density and the metabolic potential of the environment. The regulation of gene expression in response to changes in cell density is called quorum sensing. Catalyzes the transformation of S-ribosylhomocysteine (RHC) to homocysteine (HC) and 4,5-dihydroxy-2,3-pentadione (DPD). The chain is S-ribosylhomocysteine lyase from Streptococcus pyogenes serotype M4 (strain MGAS10750).